We begin with the raw amino-acid sequence, 45 residues long: Large ribosomal subunit protein bL34c (45 aa).

It belongs to the bacterial ribosomal protein bL34 family.

It localises to the plastid. Its subcellular location is the chloroplast. The polypeptide is Large ribosomal subunit protein bL34c (Emiliania huxleyi (Coccolithophore)).